The primary structure comprises 495 residues: GTPase Der (495 aa).

2 EngA-type G domains span residues 3 to 166 and 208 to 381; these read PVVA…VQDE and IKLA…SCAT. GTP-binding positions include 9-16, 56-60, 118-121, 214-221, 261-265, and 326-329; these read GRPNVGKS, DTGGI, NKTD, DTAGV, and NKWD. Positions 382 to 466 constitute a KH-like domain; sequence RRVSTAMLTR…PIRIQFKEGE (85 aa).

The protein belongs to the TRAFAC class TrmE-Era-EngA-EngB-Septin-like GTPase superfamily. EngA (Der) GTPase family. As to quaternary structure, associates with the 50S ribosomal subunit.

In terms of biological role, GTPase that plays an essential role in the late steps of ribosome biogenesis. The polypeptide is GTPase Der (Pectobacterium atrosepticum (strain SCRI 1043 / ATCC BAA-672) (Erwinia carotovora subsp. atroseptica)).